A 152-amino-acid chain; its full sequence is Transcriptional repressor NrdR (152 aa).

The segment at cysteine 3–cysteine 34 is a zinc-finger region. The 91-residue stretch at leucine 48–glutamate 138 folds into the ATP-cone domain.

Belongs to the NrdR family. Zn(2+) serves as cofactor.

Negatively regulates transcription of bacterial ribonucleotide reductase nrd genes and operons by binding to NrdR-boxes. In Chlamydia abortus (strain DSM 27085 / S26/3) (Chlamydophila abortus), this protein is Transcriptional repressor NrdR.